We begin with the raw amino-acid sequence, 260 residues long: Ribosome maturation factor RimP (260 aa).

Composition is skewed to basic and acidic residues over residues 189 to 199 and 215 to 227; these read RRGRDAEREQL and AREMRDKAGPRKE. Positions 189–260 are disordered; the sequence is RRGRDAEREQ…QTTSDPHQGE (72 aa). The segment covering 228 to 242 has biased composition (basic residues); that stretch reads KTAKKPLPKNTKAHR.

Belongs to the RimP family.

The protein resides in the cytoplasm. In terms of biological role, required for maturation of 30S ribosomal subunits. This is Ribosome maturation factor RimP from Afipia carboxidovorans (strain ATCC 49405 / DSM 1227 / KCTC 32145 / OM5) (Oligotropha carboxidovorans).